Consider the following 256-residue polypeptide: Imidazole glycerol phosphate synthase subunit HisF (256 aa).

Residues D11 and D130 contribute to the active site.

Belongs to the HisA/HisF family. In terms of assembly, heterodimer of HisH and HisF.

It is found in the cytoplasm. It catalyses the reaction 5-[(5-phospho-1-deoxy-D-ribulos-1-ylimino)methylamino]-1-(5-phospho-beta-D-ribosyl)imidazole-4-carboxamide + L-glutamine = D-erythro-1-(imidazol-4-yl)glycerol 3-phosphate + 5-amino-1-(5-phospho-beta-D-ribosyl)imidazole-4-carboxamide + L-glutamate + H(+). The protein operates within amino-acid biosynthesis; L-histidine biosynthesis; L-histidine from 5-phospho-alpha-D-ribose 1-diphosphate: step 5/9. Its function is as follows. IGPS catalyzes the conversion of PRFAR and glutamine to IGP, AICAR and glutamate. The HisF subunit catalyzes the cyclization activity that produces IGP and AICAR from PRFAR using the ammonia provided by the HisH subunit. The polypeptide is Imidazole glycerol phosphate synthase subunit HisF (Prochlorococcus marinus (strain AS9601)).